Reading from the N-terminus, the 279-residue chain is tRNA pseudouridine synthase A (279 aa).

Residue Asp54 is the Nucleophile of the active site. Position 112 (Tyr112) interacts with substrate.

The protein belongs to the tRNA pseudouridine synthase TruA family. In terms of assembly, homodimer.

The catalysed reaction is uridine(38/39/40) in tRNA = pseudouridine(38/39/40) in tRNA. Its function is as follows. Formation of pseudouridine at positions 38, 39 and 40 in the anticodon stem and loop of transfer RNAs. The polypeptide is tRNA pseudouridine synthase A (Cutibacterium acnes (strain DSM 16379 / KPA171202) (Propionibacterium acnes)).